Here is a 611-residue protein sequence, read N- to C-terminus: Growth hormone receptor (611 aa).

A signal peptide spans 1-20 (MDLRHLLLTLVLVCANDSLS). A glycan (N-linked (GlcNAc...) asparagine) is linked at N16. At 21-240 (ASDDVLRLPQ…EFVHCAEEIE (220 aa)) the chain is on the extracellular side. Cysteines 34 and 44 form a disulfide. N53 is a glycosylation site (N-linked (GlcNAc...) asparagine). An intrachain disulfide couples C75 to C86. An N-linked (GlcNAc...) asparagine glycan is attached at N89. A disulfide bond links C100 and C114. The Fibronectin type-III domain maps to 125–228 (PPVHLNWTLL…EILYVSFSQA (104 aa)). N-linked (GlcNAc...) asparagine glycans are attached at residues N130, N135, and N174. The WSXWS motif signature appears at 214–218 (FGEFS). The chain crosses the membrane as a helical span at residues 241-264 (FPWFLVVIFGACGLAVTVILILLS). The Cytoplasmic portion of the chain corresponds to 265–611 (KQSRLKMLIF…STDQLNKIMP (347 aa)). The interval 270-355 (KMLIFPPVPV…HLKSHSCLGA (86 aa)) is required for JAK2 binding. The short motif at 273–281 (IFPPVPVPK) is the Box 1 motif element. The UbE motif signature appears at 316–325 (DLWVEFIELD). Positions 411-455 (SLPSLANTDTQQPRMSTRPENSQPWPPFADSIDAASPSAHNQLSN) are disordered. Polar residues predominate over residues 414–433 (SLANTDTQQPRMSTRPENSQ).

This sequence belongs to the type I cytokine receptor family. Type 1 subfamily. The soluble form (GHBP) is produced by phorbol ester-promoted proteolytic cleavage at the cell surface (shedding) by ADAM17/TACE.

It localises to the cell membrane. The protein resides in the secreted. Its function is as follows. Receptor for pituitary gland growth hormone (GH1) involved in regulating postnatal body growth. On ligand binding, couples to the JAK2/STAT5 pathway. In terms of biological role, the soluble form (GHBP) acts as a reservoir of growth hormone in plasma and may be a modulator/inhibitor of GH signaling. The polypeptide is Growth hormone receptor (GHR) (Columba livia (Rock dove)).